The primary structure comprises 1082 residues: TNF receptor-associated factor homolog 1b (1082 aa).

Positions 1 to 54 are disordered; sequence MAEAVDEDSGVGRSLEESSNGQHSQAGEALSEWRSSGQVENGTPSTSPSYWDID. At Ala-2 the chain carries N-acetylalanine. Polar residues predominate over residues 33–49; it reads WRSSGQVENGTPSTSPS. The 132-residue stretch at 67 to 198 folds into the MATH domain; the sequence is YGQYTWKIPK…SGCLTIEAKV (132 aa). Disordered regions lie at residues 358 to 388, 440 to 666, 697 to 762, 780 to 800, 812 to 841, and 858 to 889; these read LPPK…ERDE, TEQR…SNVG, SIVN…QVVL, LSAP…APII, SSVQ…NQQT, and SSSS…PTSS. Basic and acidic residues-rich tracts occupy residues 359–388 and 440–453; these read PPKD…ERDE and TEQR…EREK. Residues 446 to 507 adopt a coiled-coil conformation; the sequence is RGAAEREKKS…EEEKDSVTEK (62 aa). Positions 454–471 are enriched in basic residues; the sequence is KSKKKQAKQKRNKNKGKD. A compositionally biased stretch (basic and acidic residues) spans 472-488; that stretch reads KRKEEKVSFATHAKDLE. 2 stretches are compositionally biased toward low complexity: residues 519-534 and 560-573; these read GDVS…SADI and SSEG…ISIS. 2 stretches are compositionally biased toward polar residues: residues 588–630 and 645–666; these read DDSS…QQVK and QPST…SNVG. Low complexity-rich tracts occupy residues 858–871 and 878–889; these read SSSS…SSHG and PSSSYSQAPTSS.

As to quaternary structure, forms homooligomers. Interacts with SNC1, RPS2 and CPR1/CPR30. Interacts with ATG6.

It localises to the cytoplasm. The protein localises to the cell membrane. Functions redundantly with TRAF1A in the regulation of plant immune response. Contributes to the turnover of the nucleotide-binding domain and leucine-rich repeat-containing (NB-LRR) immune receptors SNC1 and RPS2. May associate with an E3 ubiquitin-protein ligase complex, which modulates ubiquitination and subsequent degradation of NB-LRR immune sensors to maintain their homeostasis. Functions redundantly with TRAF1A in the regulation of autophagosome formation. Required for SINAT1- and SINAT2-mediated ubiquitination and destabilization of ATG6. Functions as a molecular adapter that helps to regulate autophagy by modulating ATG6 stability. This Arabidopsis thaliana (Mouse-ear cress) protein is TNF receptor-associated factor homolog 1b.